The sequence spans 156 residues: C-type lectin lectoxin-Lei1 (156 aa).

An N-terminal signal peptide occupies residues 1–23 (MRRFLFLSLGVLVVAFSLNGIGA). 3 disulfide bridges follow: Cys27–Cys38, Cys55–Cys154, and Cys129–Cys146. Positions 34-155 (FDRFCYKVIK…CESRNIFICK (122 aa)) constitute a C-type lectin domain. 2 N-linked (GlcNAc...) asparagine glycosylation sites follow: Asn60 and Asn99. Positions 119-121 (KRN) match the Sugar-binding motif. Asn142 contributes to the Ca(2+) binding site.

This sequence belongs to the true venom lectin family. As to expression, expressed by the venom gland.

The protein resides in the secreted. Lectin which recognizes specific carbohydrate structures and agglutinates a variety of animal cells by binding to cell-surface glycoproteins and glycolipids. May be a calcium-dependent lectin. The chain is C-type lectin lectoxin-Lei1 from Leioheterodon madagascariensis (Malagasy giant hognose snake).